The following is a 159-amino-acid chain: Putative pre-16S rRNA nuclease (159 aa).

The protein belongs to the YqgF nuclease family.

Its subcellular location is the cytoplasm. In terms of biological role, could be a nuclease involved in processing of the 5'-end of pre-16S rRNA. The polypeptide is Putative pre-16S rRNA nuclease (Bartonella quintana (strain Toulouse) (Rochalimaea quintana)).